The following is a 359-amino-acid chain: MSALDTAPAGSLAETHAQRGTRAVAFWLWSLAVLVFLMVVLGGATRLTESGLSITEWKPISGALPPLSAEAWQAEFENYKRIPQYAALFPDMDLAGFKFIFFFEWSHRLLGRLIGVATALPLLFFWLRGRLPEGYRLKLLGLLALGGLQGFVGWWMVKSGLSDRVEVAQERLAIHLILASLTFCFIVWLAASLRKRPREISPSKASGLAWGAGLILLAILVQIGLGALVAGLRAGRAYNTWPLIEGNFLPPVESLTLLTPLWRNFVDNLLTVQFQHRMVAYLVLGLTLLQVFWTSGTLGSGRATKRAIALLGLVLAQVILGILTLVLVVPLWAGLLHQAFAMLVLGMAVAHLQALSQGR.

6 helical membrane-spanning segments follow: residues 23 to 43 (AVAF…VLGG), 85 to 105 (YAAL…FFEW), 109 to 129 (LLGR…WLRG), 137 to 157 (LKLL…WWMV), 172 to 192 (LAIH…LAAS), and 212 to 232 (AGLI…VAGL). A heme-binding site is contributed by His276. Transmembrane regions (helical) follow at residues 278-298 (MVAY…SGTL), 308-328 (IALL…LVLV), and 329-349 (VPLW…GMAV). His337 is a binding site for heme.

The protein belongs to the COX15/CtaA family. Type 2 subfamily. In terms of assembly, interacts with CtaB. It depends on heme b as a cofactor.

The protein resides in the cell membrane. The catalysed reaction is Fe(II)-heme o + 2 A + H2O = Fe(II)-heme a + 2 AH2. The protein operates within porphyrin-containing compound metabolism; heme A biosynthesis; heme A from heme O: step 1/1. Catalyzes the conversion of heme O to heme A by two successive hydroxylations of the methyl group at C8. The first hydroxylation forms heme I, the second hydroxylation results in an unstable dihydroxymethyl group, which spontaneously dehydrates, resulting in the formyl group of heme A. This Beijerinckia indica subsp. indica (strain ATCC 9039 / DSM 1715 / NCIMB 8712) protein is Heme A synthase.